We begin with the raw amino-acid sequence, 349 residues long: B3 domain-containing protein At5g24050 (349 aa).

The TF-B3 DNA-binding region spans 240-341 (FNNLLRNDFL…ILCFAMEQSS (102 aa)).

It localises to the nucleus. The chain is B3 domain-containing protein At5g24050 from Arabidopsis thaliana (Mouse-ear cress).